Consider the following 287-residue polypeptide: Energy-coupling factor transporter ATP-binding protein EcfA (287 aa).

The ABC transporter domain maps to 19-252; that stretch reads FEIQNVSFSY…EEFLASSALD (234 aa). Residue 52 to 59 participates in ATP binding; that stretch reads GHNGSGKS.

Belongs to the ABC transporter superfamily. Energy-coupling factor EcfA family. Forms a stable energy-coupling factor (ECF) transporter complex composed of 2 membrane-embedded substrate-binding proteins (S component), 2 ATP-binding proteins (A component) and 2 transmembrane proteins (T component).

The protein localises to the cell membrane. Its function is as follows. ATP-binding (A) component of a common energy-coupling factor (ECF) ABC-transporter complex. Unlike classic ABC transporters this ECF transporter provides the energy necessary to transport a number of different substrates. This is Energy-coupling factor transporter ATP-binding protein EcfA from Malacoplasma penetrans (strain HF-2) (Mycoplasma penetrans).